Reading from the N-terminus, the 180-residue chain is Putative manganese efflux pump MntP (180 aa).

A run of 6 helical transmembrane segments spans residues 6-26, 34-54, 67-87, 103-123, 130-150, and 159-179; these read LFALAVALGTDAFSLCIGIGI, IALISLTVLIFHILMPLLGWY, ASIAGALLLLYLGGKMIWDTI, GGLLLLSASVSMDALSVGFTL, LVLAAGVIGLVAGMMTFAGLT, and IGERAELVGGIILVGIGVKLF.

It belongs to the MntP (TC 9.B.29) family.

The protein resides in the cell membrane. Its function is as follows. Probably functions as a manganese efflux pump. In Desulforamulus reducens (strain ATCC BAA-1160 / DSM 100696 / MI-1) (Desulfotomaculum reducens), this protein is Putative manganese efflux pump MntP.